A 130-amino-acid chain; its full sequence is uncharacterized protein (130 aa).

Positions 1-26 are cleaved as a signal peptide; sequence MINNFKGILIIILSFLFLLLFKYSNA. N-linked (GlcNAc...) asparagine glycosylation is present at asparagine 58.

Belongs to the Dictyostelium gerABC family.

Its subcellular location is the secreted. This is an uncharacterized protein from Dictyostelium discoideum (Social amoeba).